The chain runs to 410 residues: Cytochrome P450 (410 aa).

Cys-359 serves as a coordination point for heme.

This sequence belongs to the cytochrome P450 family. Heme is required as a cofactor.

The sequence is that of Cytochrome P450 (cypA) from Bacillus subtilis (strain 168).